Consider the following 294-residue polypeptide: Glycine--tRNA ligase alpha subunit (294 aa).

It belongs to the class-II aminoacyl-tRNA synthetase family. In terms of assembly, tetramer of two alpha and two beta subunits.

The protein localises to the cytoplasm. The catalysed reaction is tRNA(Gly) + glycine + ATP = glycyl-tRNA(Gly) + AMP + diphosphate. The chain is Glycine--tRNA ligase alpha subunit from Natranaerobius thermophilus (strain ATCC BAA-1301 / DSM 18059 / JW/NM-WN-LF).